We begin with the raw amino-acid sequence, 620 residues long: Endoglucanase 21 (620 aa).

The segment at 1–39 is disordered; sequence MYGRDPWGGPLEINAADSMTDDDRSRNLQDLDRATPSRP. Residues 1–70 lie on the Cytoplasmic side of the membrane; that stretch reads MYGRDPWGGP…DLGCILVSRK (70 aa). Residues 21 to 39 show a composition bias toward basic and acidic residues; that stretch reads DDDRSRNLQDLDRATPSRP. The chain crosses the membrane as a helical; Signal-anchor for type II membrane protein span at residues 71–91; it reads IFLWTLGTIVVTALLSGFITL. At 92–620 the chain is on the extracellular side; sequence IVKTLPHHHH…TPPPPAPWTP (529 aa). Asparagine 108 and asparagine 134 each carry an N-linked (GlcNAc...) asparagine glycan. Aspartate 166 (nucleophile) is an active-site residue. 6 N-linked (GlcNAc...) asparagine glycosylation sites follow: asparagine 217, asparagine 325, asparagine 346, asparagine 409, asparagine 426, and asparagine 482. Active-site residues include histidine 514 and aspartate 561. The N-linked (GlcNAc...) asparagine glycan is linked to asparagine 567. Glutamate 570 is a catalytic residue.

This sequence belongs to the glycosyl hydrolase 9 (cellulase E) family. Expressed in conductive tissues of young roots, cotyledons, rosette leaves, cauline leaves and sepals. Expressed in the leaf trichome support cells.

It localises to the cell membrane. The catalysed reaction is Endohydrolysis of (1-&gt;4)-beta-D-glucosidic linkages in cellulose, lichenin and cereal beta-D-glucans.. This Arabidopsis thaliana (Mouse-ear cress) protein is Endoglucanase 21 (KOR3).